Consider the following 72-residue polypeptide: Cell division protein ZapB (72 aa).

Residues 1-71 adopt a coiled-coil conformation; the sequence is MSLEILDQLE…IRSLLGKFDN (71 aa).

Belongs to the ZapB family. As to quaternary structure, homodimer. The ends of the coiled-coil dimer bind to each other, forming polymers. Interacts with FtsZ.

It localises to the cytoplasm. In terms of biological role, non-essential, abundant cell division factor that is required for proper Z-ring formation. It is recruited early to the divisome by direct interaction with FtsZ, stimulating Z-ring assembly and thereby promoting cell division earlier in the cell cycle. Its recruitment to the Z-ring requires functional FtsA or ZipA. The protein is Cell division protein ZapB of Haemophilus influenzae (strain 86-028NP).